Consider the following 297-residue polypeptide: Phenylalanine-4-hydroxylase (297 aa).

Residues H138, H143, and E184 each coordinate Fe cation.

It belongs to the biopterin-dependent aromatic amino acid hydroxylase family. As to quaternary structure, monomer. Fe(2+) serves as cofactor.

It carries out the reaction (6R)-L-erythro-5,6,7,8-tetrahydrobiopterin + L-phenylalanine + O2 = (4aS,6R)-4a-hydroxy-L-erythro-5,6,7,8-tetrahydrobiopterin + L-tyrosine. It functions in the pathway amino-acid degradation; L-phenylalanine degradation; acetoacetate and fumarate from L-phenylalanine: step 1/6. This Chromobacterium violaceum (strain ATCC 12472 / DSM 30191 / JCM 1249 / CCUG 213 / NBRC 12614 / NCIMB 9131 / NCTC 9757 / MK) protein is Phenylalanine-4-hydroxylase (phhA).